The primary structure comprises 462 residues: Sensor histidine kinase ZraS (462 aa).

The Cytoplasmic portion of the chain corresponds to 1–14 (MNVMRLSKDSVAVG). A helical transmembrane segment spans residues 15 to 35 (LSWLLTGLILLLVCLFSALIV). Over 36–197 (RDYGRENEAA…ADHARGLRNM (162 aa)) the chain is Periplasmic. A helical membrane pass occupies residues 198–218 (VIMLCAAGVVMAATVLAQFWF). The Cytoplasmic segment spans residues 219-462 (RRYQRSRKQL…VNGQQKDEQG (244 aa)). Residues 247 to 455 (GVAHEIRNPL…LFTFYLPVNG (209 aa)) enclose the Histidine kinase domain. A Phosphohistidine; by autocatalysis modification is found at His250.

In terms of processing, autophosphorylated.

It localises to the cell inner membrane. It carries out the reaction ATP + protein L-histidine = ADP + protein N-phospho-L-histidine.. Activity of the ZraS/ZraR two-component system is repressed by the zinc-bound form of ZraP, which probably interacts with the periplasmic region of ZraS. Part of the Zra signaling pathway, an envelope stress response (ESR) system composed of the periplasmic accessory protein ZraP, the histidine kinase ZraS and the transcriptional regulator ZraR. The ZraPSR system contributes to antibiotic resistance and is important for membrane integrity in the presence of membrane-targeting biocides. ZraS is a member of the two-component regulatory system ZraS/ZraR. Functions as a membrane-associated sensor kinase that phosphorylates ZraR in response to high concentrations of Zn(2+) or Pb(2+) in the medium. This chain is Sensor histidine kinase ZraS (zraS), found in Klebsiella oxytoca.